A 471-amino-acid chain; its full sequence is MSVLKEYRTVSEVVGPLMIVDQVAGVHYNELVDITLHNGERRKGQVLEVQGDKAMVQLFEGSTGINLAKTKVRFTGHSLELAVSEDMVGRIFDGMGQPIDGGPELIPEKYLDIDGQAINPVARDYPDEFIQTGISAIDHLNTLVRGQKLPVFSGSGLPHNELAAQIARQATVLNSDDNFAVVFAAMGITFEEAEFFMNDLRETGAIDRSVLFINLANDPAIERIATPRIALTTAEYLAYEKGMHVLVIMTDMTNYCEALREVSAARREVPGRRGYPGYLYTNLSTLYERAGRLIGKKGSVTQIPILTMPEDDITHPIPDLTGYITEGQIILSQELYKNGFRPPINVLPSLSRLKDKGSGEGKTRQDHAATMNQLFAAYAQGKQAKELAVVLGESALSETDKLYVAFTNRFEEEYINQGFYTNRSIEESLDLGWELLSILPRTELKRIKDDMLDRYLPKADTTMTKVFVAND.

The protein belongs to the ATPase alpha/beta chains family.

Functionally, produces ATP from ADP in the presence of a proton gradient across the membrane. The V-type beta chain is a regulatory subunit. The chain is V-type ATP synthase beta chain from Streptococcus pyogenes serotype M49 (strain NZ131).